Consider the following 476-residue polypeptide: Bifunctional protein HldE (476 aa).

Positions 1–319 (MKPTLPNYDQ…EAIHGSQDSG (319 aa)) are ribokinase. ATP is bound at residue 195 to 198 (NMLE). Residue Asp264 is part of the active site. A cytidylyltransferase region spans residues 344 to 476 (MTNGCFDILH…IIEAIKGGRG (133 aa)).

It in the N-terminal section; belongs to the carbohydrate kinase PfkB family. In the C-terminal section; belongs to the cytidylyltransferase family. As to quaternary structure, homodimer.

It catalyses the reaction D-glycero-beta-D-manno-heptose 7-phosphate + ATP = D-glycero-beta-D-manno-heptose 1,7-bisphosphate + ADP + H(+). The enzyme catalyses D-glycero-beta-D-manno-heptose 1-phosphate + ATP + H(+) = ADP-D-glycero-beta-D-manno-heptose + diphosphate. The protein operates within nucleotide-sugar biosynthesis; ADP-L-glycero-beta-D-manno-heptose biosynthesis; ADP-L-glycero-beta-D-manno-heptose from D-glycero-beta-D-manno-heptose 7-phosphate: step 1/4. It participates in nucleotide-sugar biosynthesis; ADP-L-glycero-beta-D-manno-heptose biosynthesis; ADP-L-glycero-beta-D-manno-heptose from D-glycero-beta-D-manno-heptose 7-phosphate: step 3/4. Its function is as follows. Catalyzes the phosphorylation of D-glycero-D-manno-heptose 7-phosphate at the C-1 position to selectively form D-glycero-beta-D-manno-heptose-1,7-bisphosphate. Catalyzes the ADP transfer from ATP to D-glycero-beta-D-manno-heptose 1-phosphate, yielding ADP-D-glycero-beta-D-manno-heptose. The sequence is that of Bifunctional protein HldE from Aliivibrio fischeri (strain ATCC 700601 / ES114) (Vibrio fischeri).